An 82-amino-acid polypeptide reads, in one-letter code: MSYEKVLQAGKIVIGTKQTIRALKEGKAAEVIVAEDADLPIIEKVTAAANEANVPVTKVDSMKKLGKACKIQVGAAAVAILR.

It belongs to the eukaryotic ribosomal protein eL8 family.

The protein is RNA-binding protein GK0100 of Geobacillus kaustophilus (strain HTA426).